Consider the following 341-residue polypeptide: UDP-3-O-acylglucosamine N-acyltransferase (341 aa).

The active-site Proton acceptor is the H239.

The protein belongs to the transferase hexapeptide repeat family. LpxD subfamily. As to quaternary structure, homotrimer.

It catalyses the reaction a UDP-3-O-[(3R)-3-hydroxyacyl]-alpha-D-glucosamine + a (3R)-hydroxyacyl-[ACP] = a UDP-2-N,3-O-bis[(3R)-3-hydroxyacyl]-alpha-D-glucosamine + holo-[ACP] + H(+). It participates in bacterial outer membrane biogenesis; LPS lipid A biosynthesis. In terms of biological role, catalyzes the N-acylation of UDP-3-O-acylglucosamine using 3-hydroxyacyl-ACP as the acyl donor. Is involved in the biosynthesis of lipid A, a phosphorylated glycolipid that anchors the lipopolysaccharide to the outer membrane of the cell. The polypeptide is UDP-3-O-acylglucosamine N-acyltransferase (Photobacterium profundum (strain SS9)).